Consider the following 256-residue polypeptide: Probable enoyl-CoA hydratase echA14 (256 aa).

The tract at residues 235 to 256 (GPQAKSVQSPEFAARLAAAQHR) is disordered.

It belongs to the enoyl-CoA hydratase/isomerase family.

It catalyses the reaction a (3S)-3-hydroxyacyl-CoA = a (2E)-enoyl-CoA + H2O. The enzyme catalyses a 4-saturated-(3S)-3-hydroxyacyl-CoA = a (3E)-enoyl-CoA + H2O. In terms of biological role, could possibly oxidize fatty acids using specific components. The protein is Probable enoyl-CoA hydratase echA14 (echA14) of Mycobacterium tuberculosis (strain CDC 1551 / Oshkosh).